The chain runs to 279 residues: Tryptophan synthase alpha chain (279 aa).

Active-site proton acceptor residues include glutamate 50 and aspartate 61.

This sequence belongs to the TrpA family. Tetramer of two alpha and two beta chains.

The catalysed reaction is (1S,2R)-1-C-(indol-3-yl)glycerol 3-phosphate + L-serine = D-glyceraldehyde 3-phosphate + L-tryptophan + H2O. The protein operates within amino-acid biosynthesis; L-tryptophan biosynthesis; L-tryptophan from chorismate: step 5/5. Functionally, the alpha subunit is responsible for the aldol cleavage of indoleglycerol phosphate to indole and glyceraldehyde 3-phosphate. In Methylobacterium radiotolerans (strain ATCC 27329 / DSM 1819 / JCM 2831 / NBRC 15690 / NCIMB 10815 / 0-1), this protein is Tryptophan synthase alpha chain.